Here is a 464-residue protein sequence, read N- to C-terminus: Cytoplasmic tRNA 2-thiolation protein 2 (464 aa).

The protein belongs to the CTU2/NCS2 family.

The protein localises to the cytoplasm. It participates in tRNA modification; 5-methoxycarbonylmethyl-2-thiouridine-tRNA biosynthesis. Its function is as follows. Plays a central role in 2-thiolation of mcm(5)S(2)U at tRNA wobble positions of tRNA(Lys), tRNA(Glu) and tRNA(Gln). May act by forming a heterodimer with NCS6/CTU1 that ligates sulfur from thiocarboxylated URM1 onto the uridine of tRNAs at wobble position. In Oryza sativa subsp. indica (Rice), this protein is Cytoplasmic tRNA 2-thiolation protein 2.